An 82-amino-acid polypeptide reads, in one-letter code: Omega-conotoxin-like Am6.2 (82 aa).

A signal peptide spans methionine 1 to alanine 22. Positions valine 23–arginine 52 are excised as a propeptide. 3 disulfide bridges follow: cysteine 56/cysteine 73, cysteine 63/cysteine 77, and cysteine 72/cysteine 81. The residue at position 76 (tryptophan 76) is a 6'-bromotryptophan; partial; in Am6.2b (major form).

Belongs to the conotoxin O1 family. Mostly non-hydroxylated. In terms of processing, two forms of this peptides have been described. Am6.2a (Am3136) is not unmodified, while Am6.2b (Am3214) is Trp-76 brominated. Both forms are found in venom with a much more abundant brominated form. Expressed by the venom duct.

It is found in the secreted. Functionally, omega-conotoxins act at presynaptic membranes, they bind and block voltage-gated calcium channels (Cav). The sequence is that of Omega-conotoxin-like Am6.2 from Conus amadis (Amadis cone).